We begin with the raw amino-acid sequence, 723 residues long: DNA-binding protein RFX2 (723 aa).

The disordered stretch occupies residues 1-46 (MQNSEGGADSPASVALRPSAAAPPVPASPQRVLVQAASSAPKGAQM). Low complexity predominate over residues 10 to 20 (SPASVALRPSA). Position 28 is a phosphoserine (serine 28). Positions 199 to 274 (HLQWLLDNYE…YHYYGIRLKP (76 aa)) form a DNA-binding region, RFX-type winged-helix. Residues 292 to 332 (QQPMHQKPRYRPAQKTDSLGDSGSHSSLHSTPEQTMAAQSQ) are disordered. Positions 307-322 (TDSLGDSGSHSSLHST) are enriched in low complexity. Polar residues predominate over residues 323 to 332 (PEQTMAAQSQ). Phosphoserine is present on serine 416. The interval 689–723 (GDERRGSEAGPDAHSLGEPLVKRERSDPNHSLQGI) is disordered.

It belongs to the RFX family. In terms of assembly, homodimer; probably only forms homodimers in testis. Heterodimer; heterodimerizes with RFX1 and RFX3.

It is found in the nucleus. The protein resides in the cytoplasm. Transcription factor that acts as a key regulator of spermatogenesis. Acts by regulating expression of genes required for the haploid phase during spermiogenesis, such as genes required for cilium assembly and function. Recognizes and binds the X-box, a regulatory motif with DNA sequence 5'-GTNRCC(0-3N)RGYAAC-3' present on promoters. Probably activates transcription of the testis-specific histone gene H1-6. The polypeptide is DNA-binding protein RFX2 (RFX2) (Macaca fascicularis (Crab-eating macaque)).